A 211-amino-acid chain; its full sequence is Urease accessory protein UreF (211 aa).

It belongs to the UreF family. UreD, UreF and UreG form a complex that acts as a GTP-hydrolysis-dependent molecular chaperone, activating the urease apoprotein by helping to assemble the nickel containing metallocenter of UreC. The UreE protein probably delivers the nickel.

The protein localises to the cytoplasm. In terms of biological role, required for maturation of urease via the functional incorporation of the urease nickel metallocenter. The sequence is that of Urease accessory protein UreF from Mycobacterium sp. (strain JLS).